The following is a 944-amino-acid chain: Isoleucine--tRNA ligase (944 aa).

Positions 58–68 match the 'HIGH' region motif; sequence PYANGSIHIGH. Position 563 (Glu563) interacts with L-isoleucyl-5'-AMP. The 'KMSKS' region signature appears at 604 to 608; the sequence is KMSKS. Lys607 contributes to the ATP binding site. Residues Cys907, Cys910, Cys927, and Cys930 each contribute to the Zn(2+) site.

The protein belongs to the class-I aminoacyl-tRNA synthetase family. IleS type 1 subfamily. In terms of assembly, monomer. Zn(2+) serves as cofactor.

The protein resides in the cytoplasm. The enzyme catalyses tRNA(Ile) + L-isoleucine + ATP = L-isoleucyl-tRNA(Ile) + AMP + diphosphate. Its function is as follows. Catalyzes the attachment of isoleucine to tRNA(Ile). As IleRS can inadvertently accommodate and process structurally similar amino acids such as valine, to avoid such errors it has two additional distinct tRNA(Ile)-dependent editing activities. One activity is designated as 'pretransfer' editing and involves the hydrolysis of activated Val-AMP. The other activity is designated 'posttransfer' editing and involves deacylation of mischarged Val-tRNA(Ile). The chain is Isoleucine--tRNA ligase from Salmonella typhimurium (strain LT2 / SGSC1412 / ATCC 700720).